Consider the following 161-residue polypeptide: Nucleotide-binding protein RC1_3464 (161 aa).

It belongs to the YajQ family.

Functionally, nucleotide-binding protein. The chain is Nucleotide-binding protein RC1_3464 from Rhodospirillum centenum (strain ATCC 51521 / SW).